We begin with the raw amino-acid sequence, 1135 residues long: Phytochrome C (1135 aa).

The segment covering 1 to 11 (MSSPLNNRGTC) has biased composition (polar residues). The disordered stretch occupies residues 1–26 (MSSPLNNRGTCSRSSSARSRHSARVV). The GAF domain occupies 216–399 (NLSLLCDVLV…VFGIQLNKEV (184 aa)). A phytochromobilin-binding site is contributed by cysteine 321. PAS domains lie at 618 to 688 (VTNE…LQGI) and 748 to 822 (IQGD…TKLS). The region spanning 902 to 1122 (YIHQELRNPL…IILIEFPVAQ (221 aa)) is the Histidine kinase domain.

This sequence belongs to the phytochrome family. Homodimer. In terms of processing, contains one covalently linked phytochromobilin chromophore.

Its function is as follows. Regulatory photoreceptor which exists in two forms that are reversibly interconvertible by light: the Pr form that absorbs maximally in the red region of the spectrum and the Pfr form that absorbs maximally in the far-red region. Photoconversion of Pr to Pfr induces an array of morphogenic responses, whereas reconversion of Pfr to Pr cancels the induction of those responses. Pfr controls the expression of a number of nuclear genes including those encoding the small subunit of ribulose-bisphosphate carboxylase, chlorophyll A/B binding protein, protochlorophyllide reductase, rRNA, etc. It also controls the expression of its own gene(s) in a negative feedback fashion. The chain is Phytochrome C (PHYC) from Sorghum bicolor (Sorghum).